The following is a 366-amino-acid chain: Ribosomal RNA large subunit methyltransferase M (366 aa).

Residues serine 188, 221-224 (CPGG), aspartate 240, aspartate 260, and aspartate 277 contribute to the S-adenosyl-L-methionine site. Residue lysine 306 is the Proton acceptor of the active site.

The protein belongs to the class I-like SAM-binding methyltransferase superfamily. RNA methyltransferase RlmE family. RlmM subfamily. Monomer.

It is found in the cytoplasm. It catalyses the reaction cytidine(2498) in 23S rRNA + S-adenosyl-L-methionine = 2'-O-methylcytidine(2498) in 23S rRNA + S-adenosyl-L-homocysteine + H(+). Catalyzes the 2'-O-methylation at nucleotide C2498 in 23S rRNA. In Shigella boydii serotype 4 (strain Sb227), this protein is Ribosomal RNA large subunit methyltransferase M.